The chain runs to 226 residues: ATP synthase F(0) complex subunit a (226 aa).

The next 6 membrane-spanning stretches (helical) occupy residues 10–30 (ITPT…PPVI), 68–88 (WSLM…LGLL), 97–117 (QLSM…ILGF), 138–158 (IPML…ALAV), 164–184 (ITAG…LTSI), and 189–209 (AMIT…VALI).

The protein belongs to the ATPase A chain family. In terms of assembly, component of the ATP synthase complex composed at least of ATP5F1A/subunit alpha, ATP5F1B/subunit beta, ATP5MC1/subunit c (homooctomer), MT-ATP6/subunit a, MT-ATP8/subunit 8, ATP5ME/subunit e, ATP5MF/subunit f, ATP5MG/subunit g, ATP5MK/subunit k, ATP5MJ/subunit j, ATP5F1C/subunit gamma, ATP5F1D/subunit delta, ATP5F1E/subunit epsilon, ATP5PF/subunit F6, ATP5PB/subunit b, ATP5PD/subunit d, ATP5PO/subunit OSCP. ATP synthase complex consists of a soluble F(1) head domain (subunits alpha(3) and beta(3)) - the catalytic core - and a membrane F(0) domain - the membrane proton channel (subunits c, a, 8, e, f, g, k and j). These two domains are linked by a central stalk (subunits gamma, delta, and epsilon) rotating inside the F1 region and a stationary peripheral stalk (subunits F6, b, d, and OSCP). Interacts with DNAJC30; interaction is direct.

The protein resides in the mitochondrion inner membrane. The enzyme catalyses H(+)(in) = H(+)(out). In terms of biological role, subunit a, of the mitochondrial membrane ATP synthase complex (F(1)F(0) ATP synthase or Complex V) that produces ATP from ADP in the presence of a proton gradient across the membrane which is generated by electron transport complexes of the respiratory chain. ATP synthase complex consist of a soluble F(1) head domain - the catalytic core - and a membrane F(1) domain - the membrane proton channel. These two domains are linked by a central stalk rotating inside the F(1) region and a stationary peripheral stalk. During catalysis, ATP synthesis in the catalytic domain of F(1) is coupled via a rotary mechanism of the central stalk subunits to proton translocation. With the subunit c (ATP5MC1), forms the proton-conducting channel in the F(0) domain, that contains two crucial half-channels (inlet and outlet) that facilitate proton movement from the mitochondrial intermembrane space (IMS) into the matrix. Protons are taken up via the inlet half-channel and released through the outlet half-channel, following a Grotthuss mechanism. This Cricetulus griseus (Chinese hamster) protein is ATP synthase F(0) complex subunit a.